The following is a 124-amino-acid chain: Urease subunit beta (124 aa).

The protein belongs to the urease beta subunit family. Heterotrimer of UreA (gamma), UreB (beta) and UreC (alpha) subunits. Three heterotrimers associate to form the active enzyme.

It is found in the cytoplasm. It catalyses the reaction urea + 2 H2O + H(+) = hydrogencarbonate + 2 NH4(+). It functions in the pathway nitrogen metabolism; urea degradation; CO(2) and NH(3) from urea (urease route): step 1/1. This is Urease subunit beta from Bacillus subtilis (strain 168).